Here is a 257-residue protein sequence, read N- to C-terminus: Thiazole synthase (257 aa).

Lys96 (schiff-base intermediate with DXP) is an active-site residue. 1-deoxy-D-xylulose 5-phosphate is bound by residues Gly157, 184-185, and 206-207; these read AG and NT.

This sequence belongs to the ThiG family. In terms of assembly, homotetramer. Forms heterodimers with either ThiH or ThiS.

The protein resides in the cytoplasm. It carries out the reaction [ThiS sulfur-carrier protein]-C-terminal-Gly-aminoethanethioate + 2-iminoacetate + 1-deoxy-D-xylulose 5-phosphate = [ThiS sulfur-carrier protein]-C-terminal Gly-Gly + 2-[(2R,5Z)-2-carboxy-4-methylthiazol-5(2H)-ylidene]ethyl phosphate + 2 H2O + H(+). It functions in the pathway cofactor biosynthesis; thiamine diphosphate biosynthesis. In terms of biological role, catalyzes the rearrangement of 1-deoxy-D-xylulose 5-phosphate (DXP) to produce the thiazole phosphate moiety of thiamine. Sulfur is provided by the thiocarboxylate moiety of the carrier protein ThiS. In vitro, sulfur can be provided by H(2)S. The chain is Thiazole synthase from Agrobacterium fabrum (strain C58 / ATCC 33970) (Agrobacterium tumefaciens (strain C58)).